Reading from the N-terminus, the 1191-residue chain is Putative glycoside hydrolase 22789 (1191 aa).

The span at Pro-173–Ala-187 shows a compositional bias: low complexity. Residues Pro-173 to Lys-221 form a disordered region.

The protein belongs to the glycoside hydrolase-like 3 (GHL3) family.

The protein is Putative glycoside hydrolase 22789 of Monosiga brevicollis (Choanoflagellate).